A 238-amino-acid chain; its full sequence is MECVEAFLGDFSVDDLLDLSNADTSLESSSSQRKEDEQEREKFKSFSDQSTRLSPPEDLLSFPGDAPVGDLEDLEWLSNFVEDSFSESYISSDFPVNPVASVEVRRQCVPVKPRSKRRRTNGRIWSMESPSPLLSTAVARRKKRGRQKVDASYGGVVQQQQLRRCCSHCGVQKTPQWRMGPLGAKTLCNACGVRFKSGRLLPEYRPACSPTFTNEIHSNSHRKVLELRLMKVADPARV.

The interval 24–64 is disordered; that stretch reads TSLESSSSQRKEDEQEREKFKSFSDQSTRLSPPEDLLSFPG. Positions 32–45 are enriched in basic and acidic residues; it reads QRKEDEQEREKFKS. The Nuclear localization signal signature appears at 112 to 119; that stretch reads KPRSKRRR. The segment at 160–214 adopts a GATA-type zinc-finger fold; sequence QQLRRCCSHCGVQKTPQWRMGPLGAKTLCNACGVRFKSGRLLPEYRPACSPTFTN.

This sequence belongs to the type IV zinc-finger family. Class A subfamily.

The protein localises to the nucleus. Functionally, transcriptional activator that specifically binds 5'-GATA-3' or 5'-GAT-3' motifs within gene promoters. May be involved in the regulation of some light-responsive genes. The sequence is that of GATA transcription factor 7 (GATA7) from Arabidopsis thaliana (Mouse-ear cress).